Reading from the N-terminus, the 337-residue chain is Glyceraldehyde-3-phosphate dehydrogenase (337 aa).

NAD(+)-binding positions include 11–12 (RI), Asp33, and Lys78. Residues 149–151 (SCT), Thr180, 209–210 (TG), and Arg232 contribute to the D-glyceraldehyde 3-phosphate site. Catalysis depends on Cys150, which acts as the Nucleophile. An NAD(+)-binding site is contributed by Asn314.

This sequence belongs to the glyceraldehyde-3-phosphate dehydrogenase family. Homotetramer.

It is found in the cytoplasm. It catalyses the reaction D-glyceraldehyde 3-phosphate + phosphate + NAD(+) = (2R)-3-phospho-glyceroyl phosphate + NADH + H(+). The protein operates within carbohydrate degradation; glycolysis; pyruvate from D-glyceraldehyde 3-phosphate: step 1/5. The polypeptide is Glyceraldehyde-3-phosphate dehydrogenase (GPD) (Lyophyllum shimeji (Hon-shimeji)).